Reading from the N-terminus, the 399-residue chain is 5'-C-glycyluridine monooxygenase-decarboxylase (399 aa).

Thr179 lines the phosphate pocket. Position 230 is an N6-(pyridoxal phosphate)lysine (Lys230). Residues Arg318, Arg322, Arg353, and Arg367 each coordinate phosphate.

Belongs to the SelA family. Homooctamer; tetramer of homodimers. The cofactor is pyridoxal 5'-phosphate.

It carries out the reaction (5'S,6'R)-C-glycyluridine + O2 = uridine-5'-carboxamide + CO2 + H2O. Its pathway is antibiotic biosynthesis. With respect to regulation, activity is dependent on phosphate. Monooxygenase-decarboxylase involved in the biosynthesis of the capuramycin-type nucleoside antibiotic A-503083. Catalyzes the oxidative decarboxylation of 5'-C-glycyluridine (GlyU) to uridine-5'-carboxamide (CarU). Is stereospecific for the (5'S,6'R)-diastereomer of GlyU. Directly incorporates a single oxygen atom from O(2) into the product CarU. This is 5'-C-glycyluridine monooxygenase-decarboxylase from Streptomyces sp.